The chain runs to 434 residues: ATP-dependent RNA helicase SUB2 (434 aa).

The segment covering methionine 1 to asparagine 16 has biased composition (acidic residues). Residues methionine 1 to alanine 32 form a disordered region. The short motif at threonine 50 to glutamine 78 is the Q motif element. The Helicase ATP-binding domain occupies isoleucine 81–histidine 256. Alanine 94–threonine 101 lines the ATP pocket. The DEAD box signature appears at aspartate 203 to aspartate 206. Residues glycine 268–serine 429 enclose the Helicase C-terminal domain.

It belongs to the DEAD box helicase family. DECD subfamily.

It is found in the nucleus. The enzyme catalyses ATP + H2O = ADP + phosphate + H(+). Its function is as follows. ATP-binding RNA helicase involved in transcription elongation and required for the export of mRNA out of the nucleus. SUB2 also plays a role in pre-mRNA splicing and spliceosome assembly. May be involved in rDNA and telomeric silencing, and maintenance of genome integrity. The polypeptide is ATP-dependent RNA helicase SUB2 (SUB2) (Chaetomium globosum (strain ATCC 6205 / CBS 148.51 / DSM 1962 / NBRC 6347 / NRRL 1970) (Soil fungus)).